Consider the following 122-residue polypeptide: Large ribosomal subunit protein uL18 (122 aa).

The span at 1–16 (MFKKVDRKASRQKKQM) shows a compositional bias: basic residues. The segment at 1–29 (MFKKVDRKASRQKKQMSIRNKISGTPERP) is disordered.

The protein belongs to the universal ribosomal protein uL18 family. As to quaternary structure, part of the 50S ribosomal subunit; part of the 5S rRNA/L5/L18/L25 subcomplex. Contacts the 5S and 23S rRNAs.

In terms of biological role, this is one of the proteins that bind and probably mediate the attachment of the 5S RNA into the large ribosomal subunit, where it forms part of the central protuberance. This chain is Large ribosomal subunit protein uL18, found in Fusobacterium nucleatum subsp. nucleatum (strain ATCC 25586 / DSM 15643 / BCRC 10681 / CIP 101130 / JCM 8532 / KCTC 2640 / LMG 13131 / VPI 4355).